The chain runs to 162 residues: Beta-lactoglobulin-1 (162 aa).

Intrachain disulfides connect Cys-66/Cys-160 and Cys-106/Cys-119.

Belongs to the calycin superfamily. Lipocalin family. As to quaternary structure, monomer. As to expression, synthesized in mammary gland and secreted in milk.

It localises to the secreted. Its function is as follows. Primary component of whey, it binds retinol and is probably involved in the transport of that molecule. The polypeptide is Beta-lactoglobulin-1 (LGB1) (Equus asinus (Donkey)).